We begin with the raw amino-acid sequence, 287 residues long: Protoheme IX farnesyltransferase (287 aa).

7 consecutive transmembrane segments (helical) span residues 19–39 (LMVA…VTIT), 100–120 (MVLC…IVAV), 134–154 (FALL…WLAV), 162–182 (MLVV…WLHA), 212–232 (VWFH…LLEW), 233–253 (VGMR…AMLA), and 267–287 (VLCA…VSLF).

It belongs to the UbiA prenyltransferase family. Protoheme IX farnesyltransferase subfamily.

It localises to the cell inner membrane. The enzyme catalyses heme b + (2E,6E)-farnesyl diphosphate + H2O = Fe(II)-heme o + diphosphate. It participates in porphyrin-containing compound metabolism; heme O biosynthesis; heme O from protoheme: step 1/1. Its function is as follows. Converts heme B (protoheme IX) to heme O by substitution of the vinyl group on carbon 2 of heme B porphyrin ring with a hydroxyethyl farnesyl side group. The chain is Protoheme IX farnesyltransferase from Nitratidesulfovibrio vulgaris (strain ATCC 29579 / DSM 644 / CCUG 34227 / NCIMB 8303 / VKM B-1760 / Hildenborough) (Desulfovibrio vulgaris).